The following is a 545-amino-acid chain: E3 ubiquitin-protein ligase ipaH9.8 (545 aa).

The segment at 1–242 (MLPINNNFSL…YHGPRIYFSM (242 aa)) is interaction with target proteins. 8 LRR repeats span residues 57–77 (NSDE…NLPA), 78–99 (QITL…PVTL), 100–117 (KKLY…VLPP), 118–139 (ALES…PDSL), 140–157 (LTMN…SLPL), 158–179 (ALKN…SEGN), 182–203 (VVRE…ILNL), and 205–228 (NECS…QRLT). Residues 243 to 250 (SDGQQNTL) are linker. Residues 251–545 (HRPLADAVTA…SENGSQLHHS (295 aa)) form an E3 ubiquitin-protein ligase catalytic domain region. The region spanning 253 to 545 (PLADAVTAWF…SENGSQLHHS (293 aa)) is the NEL domain. The active-site Glycyl thioester intermediate is the cysteine 337.

This sequence belongs to the LRR-containing bacterial E3 ligase family. As to quaternary structure, also interacts with human and mouse U2AF1 (U2AF35). Ubiquitinated in the presence of host E1 ubiquitin-activating enzyme, E2 ubiquitin-conjugating enzyme and ubiquitin.

The protein localises to the secreted. It is found in the host cytoplasm. Its subcellular location is the host nucleus. It catalyses the reaction S-ubiquitinyl-[E2 ubiquitin-conjugating enzyme]-L-cysteine + [acceptor protein]-L-lysine = [E2 ubiquitin-conjugating enzyme]-L-cysteine + N(6)-ubiquitinyl-[acceptor protein]-L-lysine.. Its activity is regulated as follows. Exists in an autoinhibited state in the absence of substrate protein, due to interactions of the leucine-rich repeats with NEL domain. Is activated upon binding to a substrate protein. In terms of biological role, effector E3 ubiquitin ligase that interferes with host's ubiquitination pathway and modulates the acute inflammatory responses, thus facilitating bacterial colonization within the host cell. Interacts with IKBKG (NEMO) and TNIP1 (ABIN-1), a ubiquitin-binding adapter protein, which results in TNIP1-dependent 'Lys-27'-linked polyubiquitination of IKBKG. Consequently, polyubiquitinated IKBKG undergoes proteasome-dependent degradation, which perturbs NF-kappa-B activation during bacterial infection. Mediates polyubiquitination of host U2AF1, leading to its proteasomal degradation. Catalyzes 'Lys-48'-linked polyubiquitination and subsequent degradation of a subset of host guanylate-binding proteins (GBP1, GBP2, GBP4 and GBP6), thereby suppressing host cell defense. In contrast, host GBP3 and GBP7 are not ubiquitinated by IpaH9.8. Uses UBE2D2 (UBCH5B) as an E2 ubiquitin-conjugating enzyme. This is E3 ubiquitin-protein ligase ipaH9.8 (ipaH9.8) from Shigella boydii serotype 4 (strain Sb227).